Consider the following 880-residue polypeptide: Probable dipeptidyl-aminopeptidase B (880 aa).

The span at 1–26 (MPRQRAPKEEEAELLTKQERSARSSE) shows a compositional bias: basic and acidic residues. Residues 1-71 (MPRQRAPKEE…KYTDEDDEAQ (71 aa)) form a disordered region. The Cytoplasmic segment spans residues 1–93 (MPRQRAPKEE…PISVDKKTRR (93 aa)). The segment covering 30 to 40 (DTSISSISTTS) has biased composition (low complexity). Residues 94-114 (WLWIVGIACVTGWALALVFFL) traverse the membrane as a helical; Signal-anchor for type II membrane protein segment. The Vacuolar segment spans residues 115–880 (MSGSYKHVST…AQVDARMERR (766 aa)). A glycan (N-linked (GlcNAc...) asparagine) is linked at Asn533. The Charge relay system role is filled by Ser724. Asn778 is a glycosylation site (N-linked (GlcNAc...) asparagine). Active-site charge relay system residues include Asp801 and His834.

The protein belongs to the peptidase S9B family.

It is found in the vacuole membrane. The catalysed reaction is Release of an N-terminal dipeptide, Xaa-Yaa-|-Zaa-, from a polypeptide, preferentially when Yaa is Pro, provided Zaa is neither Pro nor hydroxyproline.. Functionally, type IV dipeptidyl-peptidase which removes N-terminal dipeptides sequentially from polypeptides having unsubstituted N-termini provided that the penultimate residue is proline. This Pyrenophora tritici-repentis (strain Pt-1C-BFP) (Wheat tan spot fungus) protein is Probable dipeptidyl-aminopeptidase B (dapB).